The following is a 352-amino-acid chain: MKKIVFTGGGTVGHVTLNLLLMPKFIEDGWEVHYIGDKRGIEHQEILKSGLDVTFHSIATGKLRRYFSWQNMLDVFKVGWGIVQSLFIMLRLRPQTLFSKGGFVSVPPVIAARVSGVPVFIHESDLSMGLANKIAYKFATKMYSTFEQASSLSKVEHVGAVTKVSDQKNPEPDELVDIQTHFNPKLPTVLFVGGSAGARVFNQLVTDHKKELTERYNIINLTGDSSLNELSQNLFRVDYVTDLYQPLMELADIVVTRGGANTIFELLAIAKLHVIVPLGREASRGDQIENAAYFVKKGYAEDLQESDLTLDSLEEKLSHLLSHKEDYQAKMKASKELKSLADFYQLLKKDLS.

Residues Ser-195 and Gln-287 each coordinate UDP-N-acetyl-alpha-D-glucosamine.

Belongs to the glycosyltransferase 28 family. MurG subfamily.

Its subcellular location is the cell membrane. The enzyme catalyses Mur2Ac(oyl-L-Ala-gamma-D-Glu-L-Lys-D-Ala-D-Ala)-di-trans,octa-cis-undecaprenyl diphosphate + UDP-N-acetyl-alpha-D-glucosamine = beta-D-GlcNAc-(1-&gt;4)-Mur2Ac(oyl-L-Ala-gamma-D-Glu-L-Lys-D-Ala-D-Ala)-di-trans,octa-cis-undecaprenyl diphosphate + UDP + H(+). The protein operates within cell wall biogenesis; peptidoglycan biosynthesis. Functionally, cell wall formation. Catalyzes the transfer of a GlcNAc subunit on undecaprenyl-pyrophosphoryl-MurNAc-pentapeptide (lipid intermediate I) to form undecaprenyl-pyrophosphoryl-MurNAc-(pentapeptide)GlcNAc (lipid intermediate II). In Streptococcus pneumoniae (strain CGSP14), this protein is UDP-N-acetylglucosamine--N-acetylmuramyl-(pentapeptide) pyrophosphoryl-undecaprenol N-acetylglucosamine transferase.